A 376-amino-acid chain; its full sequence is Alcohol dehydrogenase class-3 (376 aa).

Zn(2+) contacts are provided by Cys-40, His-62, Cys-92, Cys-95, Cys-98, Cys-106, and Cys-170.

This sequence belongs to the zinc-containing alcohol dehydrogenase family. Class-III subfamily. In terms of assembly, homodimer. The cofactor is Zn(2+).

It localises to the cytoplasm. The catalysed reaction is a primary alcohol + NAD(+) = an aldehyde + NADH + H(+). It carries out the reaction a secondary alcohol + NAD(+) = a ketone + NADH + H(+). It catalyses the reaction S-(hydroxymethyl)glutathione + NADP(+) = S-formylglutathione + NADPH + H(+). The enzyme catalyses S-(hydroxymethyl)glutathione + NAD(+) = S-formylglutathione + NADH + H(+). Functionally, oxidizes long-chain aliphatic alcohols, long-chain hydroxylated fatty acids and S-hydroxymethylglutathione (hmGSH) in increasing order of preference. Shows little or no activity with short-chain aliphatic alcohols. This is Alcohol dehydrogenase class-3 (adhI) from Cereibacter sphaeroides (strain ATCC 17023 / DSM 158 / JCM 6121 / CCUG 31486 / LMG 2827 / NBRC 12203 / NCIMB 8253 / ATH 2.4.1.) (Rhodobacter sphaeroides).